A 130-amino-acid chain; its full sequence is Small ribosomal subunit protein uS9 (130 aa).

The interval 102–130 (GFLTRDPRKKERKKYGLKKARKSPQFSKR) is disordered. Residues 111–130 (KERKKYGLKKARKSPQFSKR) are compositionally biased toward basic residues.

The protein belongs to the universal ribosomal protein uS9 family.

This chain is Small ribosomal subunit protein uS9, found in Finegoldia magna (strain ATCC 29328 / DSM 20472 / WAL 2508) (Peptostreptococcus magnus).